Reading from the N-terminus, the 322-residue chain is MALMSAVEYPNVAILGCGKLGQALLVGLLRSASGHPGRVKIRELKVTVRSARTAQLVRERISPLLRDRAVPPVWILQQDQNCNVAEQADIVLLGCKHSSLGELVHDLQGMRHDHRRILISLMGGVSPGLIVEALHFWTGPVVRAVCSVAVAVGESITLLSTSDDHTNDAESRRAVTELFASVGVVQWLPECQMHVASAVGASSLAFFAQMIEGLAQGVAEQHSNGANNAQQLPLETALAITAQAARGTAALLQQSTSPADLVAQVATKGGATAAGLRVLEKEKLVQTLRTCAAITAEATAALSQSAGSHGEDNTTDSKTSRA.

2 consecutive transmembrane segments (helical) span residues 9–29 (YPNV…VGLL) and 117–137 (ILIS…LHFW). A disordered region spans residues 302–322 (LSQSAGSHGEDNTTDSKTSRA). Asparagine 313 carries N-linked (GlcNAc...) asparagine glycosylation.

Belongs to the pyrroline-5-carboxylate reductase family.

It is found in the membrane. The enzyme catalyses L-proline + NADP(+) = (S)-1-pyrroline-5-carboxylate + NADPH + 2 H(+). It catalyses the reaction L-proline + NAD(+) = (S)-1-pyrroline-5-carboxylate + NADH + 2 H(+). It functions in the pathway alkaloid biosynthesis. Pyrroline-5-carboxylate reductase; part of the gene cluster that mediates the biosynthesis of paraherquamide, a fungal indole alkaloid that belongs to a family of natural products containing a characteristic bicyclo[2.2.2]diazaoctane core. The first steps in the biosynthesis of paraherquamide is the production of the beta-methyl-proline precursor from L-isoleucine. They require oxidation of a terminally hydroxylated L-isoleucine to the corresponding aldehyde by enzymes which have still to be identified. Spontaneous cyclization and dehydration would yield the 4-methyl pyrolline-5-carboxylic acid, which is then reduced by the pyrroline-5-carboxylate reductase phqD leading to the beta-methyl-proline precursor. The next step of paraherquamide biosynthesis involves coupling of beta-methyl-proline and L-tryptophan by the bimodular NRPS phqB, to produce a monooxopiperazine intermediate. The reductase (R) domain of phqB utilizes NADPH for hydride transfer to reduce the thioester bond of the T domain-tethered linear dipeptide to a hemithioaminal intermediate, which spontaneously cleaves the C-S bond to release the aldehyde product. This compound undergoes spontaneous cyclization and dehydration to give a dienamine which is reverse prenylated at C-2 by the reverse prenyltransferase phqJ. The other prenyltransferase present in the cluster, phqI may be a redundant gene in the pathway. During biosynthetic assembly, the key step to produce the polycyclic core is catalyzed by the bifunctional reductase and intramolecular [4+2] Diels-Alderase, phqE, resulting in formation of the [2.2.2] diazaoctane intermediate preparaherquamide. Following formation of preparaherquamide, an indole 2,3-epoxidation-initiated pinacol-like rearrangement is catalyzed by the phqK FAD-dependent monooxygenase. The prenyltransferase phqA, the cytochrome P450 monooxygenase phqL, and the FAD-linked oxidoreductase phqH (or the cytochrome P450 monooxygenase phqM), are proposed to be involved in the formation of the pyran ring. The FAD-dependent monooxygenase phqK is likely responsible for generation of the spiro-oxindole, and the N-methylation is likely mediated by the phqN methyltransferase leading to the isolable natural product paraherquamide F. However, the order of these biosynthetic steps has still to be determined. In late-stage paraherquamide biosynthesis, the third P450 monooxygenase, phqO, is probably responsible for the C-14 hydroxylation, transforming paraherquamide F to paraherquamide G, and paraherquamide E to the final product paraherquamide A. The expansion from the 6-membered ring pyran (in paraherquamides F and G) to the 7-membered dioxepin ring (in paraherquamides A and E) represents a poorly understood but intriguing process that probably involves the 2-oxoglutarate-dependent dioxygenase phqC. Finally, the remaining members of the paraherquamide cluster, including phqI as well as phqM (or phqH), do not have a clearly prescribed role and appear to be redundant. This is Pyrroline-5-carboxylate reductase from Penicillium fellutanum.